Consider the following 591-residue polypeptide: Speriolin (591 aa).

The stretch at 1 to 42 (MSLLTNYEGLRHQIERLVRENEELKKLVRLIRENHELKSAIK) forms a coiled coil. The interval 1 to 78 (MSLLTNYEGL…NNGVFLPPSP (78 aa)) is necessary for targeting centrosomes. Residues 302 to 314 (NTSDTQAQPSAAQ) are compositionally biased toward polar residues. Disordered stretches follow at residues 302–331 (NTSDTQAQPSAAQEQVVPASVPTSPTTSPT) and 346–435 (ATSY…ENPR). A compositionally biased stretch (low complexity) spans 317 to 331 (VVPASVPTSPTTSPT). Polar residues-rich tracts occupy residues 346-357 (ATSYTPSSTTHI) and 390-401 (PRTSSSPASVND).

Belongs to the speriolin family. In terms of assembly, found in a complex with CDC20, CDC27 and TUBG1. Interacts with CDC20. As to expression, detected only in testis.

It is found in the cytoplasm. It localises to the cytoskeleton. The protein localises to the microtubule organizing center. The protein resides in the centrosome. This chain is Speriolin (SPATC1), found in Homo sapiens (Human).